We begin with the raw amino-acid sequence, 45 residues long: Keratin-associated protein 22-2 (45 aa).

This sequence belongs to the KRTAP type 20 family. In terms of assembly, interacts with hair keratins.

Functionally, in the hair cortex, hair keratin intermediate filaments are embedded in an interfilamentous matrix, consisting of hair keratin-associated proteins (KRTAP), which are essential for the formation of a rigid and resistant hair shaft through their extensive disulfide bond cross-linking with abundant cysteine residues of hair keratins. The matrix proteins include the high-sulfur and high-glycine-tyrosine keratins. The protein is Keratin-associated protein 22-2 (KRTAP22-2) of Homo sapiens (Human).